A 511-amino-acid chain; its full sequence is Sodium/proline symporter (511 aa).

13 helical membrane-spanning segments follow: residues 16-36 (WQTY…GFYG), 54-74 (IGPY…WMIM), 85-105 (LSAI…YFVV), 139-159 (IISG…GFVS), 175-195 (GLLI…YLAV), 199-219 (DFFQ…VALL), 246-266 (VLGI…PHII), 284-304 (LGIS…LTGI), 327-347 (ILFH…AIMS), 381-401 (FVLI…TIAW), 407-427 (ILNL…PLVL), 438-458 (AGAI…ISWI), and 467-487 (FFGM…TYIV).

It belongs to the sodium:solute symporter (SSF) (TC 2.A.21) family.

The protein resides in the cell membrane. The catalysed reaction is L-proline(in) + Na(+)(in) = L-proline(out) + Na(+)(out). In terms of biological role, catalyzes the sodium-dependent uptake of extracellular L-proline. This is Sodium/proline symporter (putP) from Staphylococcus epidermidis (strain ATCC 35984 / DSM 28319 / BCRC 17069 / CCUG 31568 / BM 3577 / RP62A).